Here is a 123-residue protein sequence, read N- to C-terminus: Small ribosomal subunit protein uS12cz/uS12cy (123 aa).

This sequence belongs to the universal ribosomal protein uS12 family. Part of the 30S ribosomal subunit.

The protein localises to the plastid. It is found in the chloroplast. With S4 and S5 plays an important role in translational accuracy. Located at the interface of the 30S and 50S subunits. The sequence is that of Small ribosomal subunit protein uS12cz/uS12cy (rps12-A) from Arabis hirsuta (Hairy rock-cress).